The primary structure comprises 307 residues: Aspartate carbamoyltransferase catalytic subunit (307 aa).

Residues arginine 55 and threonine 56 each coordinate carbamoyl phosphate. Position 85 (lysine 85) interacts with L-aspartate. 3 residues coordinate carbamoyl phosphate: arginine 106, histidine 135, and glutamine 138. L-aspartate is bound by residues arginine 168 and arginine 230. The carbamoyl phosphate site is built by leucine 268 and proline 269.

This sequence belongs to the aspartate/ornithine carbamoyltransferase superfamily. ATCase family. In terms of assembly, heterododecamer (2C3:3R2) of six catalytic PyrB chains organized as two trimers (C3), and six regulatory PyrI chains organized as three dimers (R2).

The enzyme catalyses carbamoyl phosphate + L-aspartate = N-carbamoyl-L-aspartate + phosphate + H(+). Its pathway is pyrimidine metabolism; UMP biosynthesis via de novo pathway; (S)-dihydroorotate from bicarbonate: step 2/3. Its function is as follows. Catalyzes the condensation of carbamoyl phosphate and aspartate to form carbamoyl aspartate and inorganic phosphate, the committed step in the de novo pyrimidine nucleotide biosynthesis pathway. The protein is Aspartate carbamoyltransferase catalytic subunit of Photorhabdus laumondii subsp. laumondii (strain DSM 15139 / CIP 105565 / TT01) (Photorhabdus luminescens subsp. laumondii).